Reading from the N-terminus, the 110-residue chain is NADH-quinone oxidoreductase subunit K (110 aa).

The next 3 membrane-spanning stretches (helical) occupy residues 14 to 34 (VSQYFILSFILLGIGLFGMMV), 39 to 59 (ITILMSLELALNSVNIAFVGI), and 70 to 90 (IFALFTIALAAAEAAVGLGII).

This sequence belongs to the complex I subunit 4L family. NDH-1 is composed of 14 different subunits. Subunits NuoA, H, J, K, L, M, N constitute the membrane sector of the complex.

It is found in the cell inner membrane. The enzyme catalyses a quinone + NADH + 5 H(+)(in) = a quinol + NAD(+) + 4 H(+)(out). Its function is as follows. NDH-1 shuttles electrons from NADH, via FMN and iron-sulfur (Fe-S) centers, to quinones in the respiratory chain. The immediate electron acceptor for the enzyme in this species is believed to be ubiquinone. Couples the redox reaction to proton translocation (for every two electrons transferred, four hydrogen ions are translocated across the cytoplasmic membrane), and thus conserves the redox energy in a proton gradient. The protein is NADH-quinone oxidoreductase subunit K of Hydrogenobaculum sp. (strain Y04AAS1).